A 336-amino-acid chain; its full sequence is MVVKVGINGFGRIGRLAFRRIQNVEGVEVTRINDLTDPNMLAHLLKYDTTQGRFDGTVEVKEGGFEVNGNFIKVSAERDPENIDWATDGVEIVLEATGFFAKKEAAEKPLHANGAKKVVITAPGGNDVKQLFSTLTTSILDGTETVISGASCTTNCLAPMAKALHDAFGIQKGLMTTIHAYTGDQMIVDGHRGGGDLRRARAGAANIVPNSTGARKAIGLVIPELNGKLDGAAQRVPVPTGSVTELVVTLDKNVSVDEINAAMKAASNDSFGYTEDPIVSSDIVGVSYGSLFDATQTKVMEVDGSQLVKVVSWYDNEMSYTAQLVRTLEYFAKIAK.

Residues 12 to 13 (RI), aspartate 34, arginine 78, and threonine 121 each bind NAD(+). D-glyceraldehyde 3-phosphate is bound by residues 151-153 (SCT), threonine 182, arginine 199, 212-213 (TG), and arginine 235. Catalysis depends on cysteine 152, which acts as the Nucleophile. Asparagine 316 contacts NAD(+).

Belongs to the glyceraldehyde-3-phosphate dehydrogenase family. Homotetramer.

The protein localises to the cytoplasm. It catalyses the reaction D-glyceraldehyde 3-phosphate + phosphate + NAD(+) = (2R)-3-phospho-glyceroyl phosphate + NADH + H(+). Its pathway is carbohydrate degradation; glycolysis; pyruvate from D-glyceraldehyde 3-phosphate: step 1/5. Its function is as follows. Catalyzes the oxidative phosphorylation of glyceraldehyde 3-phosphate (G3P) to 1,3-bisphosphoglycerate (BPG) using the cofactor NAD. The first reaction step involves the formation of a hemiacetal intermediate between G3P and a cysteine residue, and this hemiacetal intermediate is then oxidized to a thioester, with concomitant reduction of NAD to NADH. The reduced NADH is then exchanged with the second NAD, and the thioester is attacked by a nucleophilic inorganic phosphate to produce BPG. The chain is Glyceraldehyde-3-phosphate dehydrogenase (gap) from Streptococcus dysgalactiae subsp. equisimilis (Streptococcus equisimilis).